Reading from the N-terminus, the 126-residue chain is Glycine cleavage system H protein (126 aa).

The 83-residue stretch at 22–104 (KLRIGITDFA…YEKAWMIVIE (83 aa)) folds into the Lipoyl-binding domain. K63 is modified (N6-lipoyllysine).

Belongs to the GcvH family. The glycine cleavage system is composed of four proteins: P, T, L and H. (R)-lipoate is required as a cofactor.

Functionally, the glycine cleavage system catalyzes the degradation of glycine. The H protein shuttles the methylamine group of glycine from the P protein to the T protein. In terms of biological role, is also involved in protein lipoylation via its role as an octanoyl/lipoyl carrier protein intermediate. This Oceanobacillus iheyensis (strain DSM 14371 / CIP 107618 / JCM 11309 / KCTC 3954 / HTE831) protein is Glycine cleavage system H protein.